The chain runs to 179 residues: NADH-quinone oxidoreductase subunit B 1 (179 aa).

Cys-38, Cys-39, Cys-104, and Cys-133 together coordinate [4Fe-4S] cluster.

It belongs to the complex I 20 kDa subunit family. NDH-1 is composed of 14 different subunits. Subunits NuoB, C, D, E, F, and G constitute the peripheral sector of the complex. Requires [4Fe-4S] cluster as cofactor.

Its subcellular location is the cell membrane. The enzyme catalyses a quinone + NADH + 5 H(+)(in) = a quinol + NAD(+) + 4 H(+)(out). Functionally, NDH-1 shuttles electrons from NADH, via FMN and iron-sulfur (Fe-S) centers, to quinones in the respiratory chain. The immediate electron acceptor for the enzyme in this species is believed to be ubiquinone. Couples the redox reaction to proton translocation (for every two electrons transferred, four hydrogen ions are translocated across the cytoplasmic membrane), and thus conserves the redox energy in a proton gradient. The polypeptide is NADH-quinone oxidoreductase subunit B 1 (Herpetosiphon aurantiacus (strain ATCC 23779 / DSM 785 / 114-95)).